Here is a 214-residue protein sequence, read N- to C-terminus: Holliday junction branch migration complex subunit RuvA (214 aa).

The tract at residues 1 to 63 is domain I; it reads MISFLRGTVA…EDSLTLFGFS (63 aa). Residues 64 to 142 form a domain II region; sequence SDDEREVFDV…PHGTGAAAAP (79 aa). A flexible linker region spans residues 143–153; sequence AAAASAPWKPQ. Residues 153-214 are domain III; that stretch reads QVVAAMTSLG…RAGNRVGSRG (62 aa).

The protein belongs to the RuvA family. As to quaternary structure, homotetramer. Forms an RuvA(8)-RuvB(12)-Holliday junction (HJ) complex. HJ DNA is sandwiched between 2 RuvA tetramers; dsDNA enters through RuvA and exits via RuvB. An RuvB hexamer assembles on each DNA strand where it exits the tetramer. Each RuvB hexamer is contacted by two RuvA subunits (via domain III) on 2 adjacent RuvB subunits; this complex drives branch migration. In the full resolvosome a probable DNA-RuvA(4)-RuvB(12)-RuvC(2) complex forms which resolves the HJ.

The protein localises to the cytoplasm. Its function is as follows. The RuvA-RuvB-RuvC complex processes Holliday junction (HJ) DNA during genetic recombination and DNA repair, while the RuvA-RuvB complex plays an important role in the rescue of blocked DNA replication forks via replication fork reversal (RFR). RuvA specifically binds to HJ cruciform DNA, conferring on it an open structure. The RuvB hexamer acts as an ATP-dependent pump, pulling dsDNA into and through the RuvAB complex. HJ branch migration allows RuvC to scan DNA until it finds its consensus sequence, where it cleaves and resolves the cruciform DNA. This is Holliday junction branch migration complex subunit RuvA from Arthrobacter sp. (strain FB24).